Here is a 463-residue protein sequence, read N- to C-terminus: Glutamate--tRNA ligase 1 (463 aa).

The short motif at 10 to 20 (PSPTGYLHIGG) is the 'HIGH' region element. A 'KMSKS' region motif is present at residues 238 to 242 (KLSKR). Lys-241 is a binding site for ATP.

Belongs to the class-I aminoacyl-tRNA synthetase family. Glutamate--tRNA ligase type 1 subfamily. In terms of assembly, monomer.

Its subcellular location is the cytoplasm. It carries out the reaction tRNA(Glu) + L-glutamate + ATP = L-glutamyl-tRNA(Glu) + AMP + diphosphate. Functionally, catalyzes the attachment of glutamate to tRNA(Glu) in a two-step reaction: glutamate is first activated by ATP to form Glu-AMP and then transferred to the acceptor end of tRNA(Glu). The polypeptide is Glutamate--tRNA ligase 1 (Helicobacter pylori (strain P12)).